A 198-amino-acid chain; its full sequence is Na(+)-translocating NADH-quinone reductase subunit E (198 aa).

6 helical membrane passes run 11 to 31, 39 to 59, 77 to 97, 110 to 130, 140 to 160, and 176 to 196; these read SIFI…FLAV, FGLG…NNLV, FLNF…LEMV, GIFL…SFMV, IVYG…LAGI, and LGIT…FSGV.

Belongs to the NqrDE/RnfAE family. As to quaternary structure, composed of six subunits; NqrA, NqrB, NqrC, NqrD, NqrE and NqrF.

It is found in the cell inner membrane. The enzyme catalyses a ubiquinone + n Na(+)(in) + NADH + H(+) = a ubiquinol + n Na(+)(out) + NAD(+). NQR complex catalyzes the reduction of ubiquinone-1 to ubiquinol by two successive reactions, coupled with the transport of Na(+) ions from the cytoplasm to the periplasm. NqrA to NqrE are probably involved in the second step, the conversion of ubisemiquinone to ubiquinol. This chain is Na(+)-translocating NADH-quinone reductase subunit E, found in Vibrio campbellii (strain ATCC BAA-1116).